A 365-amino-acid polypeptide reads, in one-letter code: uncharacterized protein (365 aa).

The stretch at 18-46 (TAQEALTLIEKLDSDYKEKEEKITALSVH) forms a coiled coil.

This is an uncharacterized protein from Bacillus subtilis (strain 168).